We begin with the raw amino-acid sequence, 206 residues long: MAMITSRRAAAPCKAQATRRSRVMSVVRAAAVSSEVPDMNKRNIMNLILLGGASLPVGSLALGYGAFFVPPSSGGGSGGQAAKDALGNDIKANAWLATHQKGDRSLSQGLKGDPTYLIVTADGTIEKYGLNAVCTHLGCVVPWVAAENKFKCPCHGSQYNAEGKVVRGPAPLSLALAHCDVQEDGLVTFSTWSETDFRTGLEPWWA.

A chloroplast-targeting transit peptide spans Met1–Ala29. Residues Ile48 to Phe68 traverse the membrane as a helical segment. The Rieske domain occupies Ala92 to Thr188. [2Fe-2S] cluster-binding residues include Cys134, His136, Cys152, and His155. Cysteines 139 and 154 form a disulfide.

Belongs to the Rieske iron-sulfur protein family. The 4 large subunits of the cytochrome b6-f complex are cytochrome b6, subunit IV (17 kDa polypeptide, petD), cytochrome f and the Rieske protein, while the 4 small subunits are petG, petL, petM and petN. The complex functions as a dimer. The cofactor is [2Fe-2S] cluster.

It localises to the plastid. The protein localises to the chloroplast thylakoid membrane. It carries out the reaction 2 oxidized [plastocyanin] + a plastoquinol + 2 H(+)(in) = 2 reduced [plastocyanin] + a plastoquinone + 4 H(+)(out). In terms of biological role, component of the cytochrome b6-f complex, which mediates electron transfer between photosystem II (PSII) and photosystem I (PSI), cyclic electron flow around PSI, and state transitions. In Volvox carteri (Green alga), this protein is Cytochrome b6-f complex iron-sulfur subunit, chloroplastic (petC).